A 388-amino-acid chain; its full sequence is MAMVKRNNNTGMIPVSTKQLLALGAAAGATALQGFVKNNGMAIVEGAVDLTKRAYKAVRRRGGKKQQMINHVGGTGGAIMAPVAVTRQLVGSKPKFTGRTSGSVTVTHREYLSQVNNSTGFQVNGGIVGNLLQLNPLNGTLFSWLPAIASNFDQYTFNSVVLHYVPLCSTTEVGRVAIYFDKDSEDPEPADRVELANYSVLKETAPWAEAMLRVPTDKIKRFCDDSSTSDHKLIDLGQLGIATYGGAGTNAVGDIFISYSVTLYFPQPTNTLLSTRRLDLAGALVTASGPGYLLVSRTATVLTMTFRATGTFVISGTYRCLTATTLGLAGGVNVNSITVVDNIGTDSAFFINCTVSNLPSVVTFTSTGITSATVHCVRATRQNDVSLI.

Residues 1 to 102 (MAMVKRNNNT…KPKFTGRTSG (102 aa)) form a r domain, interaction with RNA region. The involved in encapsidation stretch occupies residues 56 to 61 (KAVRRR). The s domain, virion shell stretch occupies residues 103-264 (SVTVTHREYL…IFISYSVTLY (162 aa)). The segment at 265–388 (FPQPTNTLLS…ATRQNDVSLI (124 aa)) is p domain, projecting.

It belongs to the icosahedral plant coat protein family. As to quaternary structure, homomultimer.

The protein resides in the virion. Capsid protein self-assembles to form an icosahedral capsid with a T=3 symmetry, about 32-35 nm in diameter, and consisting of 180 capsid proteins. This Tomato bushy stunt virus (strain Cherry) (TBSV) protein is Capsid protein.